A 503-amino-acid chain; its full sequence is GMP synthase [glutamine-hydrolyzing] (503 aa).

The Glutamine amidotransferase type-1 domain occupies 1-178; the sequence is MREANVYSEI…LHRAAGIPAD (178 aa). Residue Cys-60 is the Nucleophile of the active site. Active-site residues include His-152 and Glu-154. The region spanning 179-377 is the GMPS ATP-PPase domain; that stretch reads WNSGNVIADQ…LGLPEVIVGR (199 aa). Residue 206-212 coordinates ATP; sequence SGGVDSA.

As to quaternary structure, homodimer.

It carries out the reaction XMP + L-glutamine + ATP + H2O = GMP + L-glutamate + AMP + diphosphate + 2 H(+). It participates in purine metabolism; GMP biosynthesis; GMP from XMP (L-Gln route): step 1/1. Functionally, catalyzes the synthesis of GMP from XMP. This chain is GMP synthase [glutamine-hydrolyzing], found in Leifsonia xyli subsp. xyli (strain CTCB07).